Consider the following 446-residue polypeptide: tRNA (guanine-N(7)-)-methyltransferase non-catalytic subunit TRM82 (446 aa).

The segment at 67–97 (LTQTSEDTEQENTAPYKKQKSSVSKPIKVPK) is disordered. Over residues 87 to 97 (SSVSKPIKVPK) the composition is skewed to low complexity. WD repeat units lie at residues 107-147 (PIYN…TENC), 202-243 (GHVS…IVKH), and 247-287 (GHRE…LLSK).

It belongs to the WD repeat TRM82 family. Forms a heterodimer with the catalytic subunit TRM8.

Its subcellular location is the nucleus. It functions in the pathway tRNA modification; N(7)-methylguanine-tRNA biosynthesis. In terms of biological role, required for the formation of N(7)-methylguanine at position 46 (m7G46) in tRNA. In the complex, it is required to stabilize and induce conformational changes of the catalytic subunit. This is tRNA (guanine-N(7)-)-methyltransferase non-catalytic subunit TRM82 from Debaryomyces hansenii (strain ATCC 36239 / CBS 767 / BCRC 21394 / JCM 1990 / NBRC 0083 / IGC 2968) (Yeast).